We begin with the raw amino-acid sequence, 252 residues long: Zinc finger protein 511 (252 aa).

3 consecutive C2H2-type zinc fingers follow at residues 80-105 (FACQ…HTLH), 107-130 (NVCS…LEWH), and 144-169 (YQCL…VRMH). Positions 177 to 221 (FDKPKKSRSPASAEAPGDSGERSEGEAMEICSEPVAASPAPAGER) are disordered. Arginine 240 is modified (omega-N-methylarginine).

It belongs to the krueppel C2H2-type zinc-finger protein family.

The protein resides in the nucleus. Functionally, may be involved in transcriptional regulation. This chain is Zinc finger protein 511, found in Homo sapiens (Human).